The primary structure comprises 357 residues: Red-sensitive opsin (357 aa).

Topologically, residues 1–49 are extracellular; it reads MGDQWGDAVFAARRRGDDTTREAAFTYTNSNNTKDPFEGPNYHIAPRWV. The N-linked (GlcNAc...) asparagine glycan is linked to asparagine 31. Residues 50 to 74 form a helical membrane-spanning segment; it reads YNLATCWMFFVVVASTVTNGLVLVA. Topologically, residues 75 to 86 are cytoplasmic; sequence SAKFKKLRHPLN. The chain crosses the membrane as a helical span at residues 87-112; sequence WILVNLAIADLLETLLASTISVCNQF. Residues 113–126 are Extracellular-facing; sequence FGYFILGHPMCVFE. Cysteine 123 and cysteine 200 are joined by a disulfide. Residues 127–146 traverse the membrane as a helical segment; it reads GFTVATCGIAGLWSLTVISW. The Cytoplasmic portion of the chain corresponds to 147–165; the sequence is ERWVVVCKPFGNVKFDGKM. Residues 166-189 traverse the membrane as a helical segment; the sequence is ATAGIVFTWVWSAVWCAPPIFGWS. Over 190-215 the chain is Extracellular; sequence RYWPHGLKTSCGPDVFSGSEDPGVQS. The helical transmembrane segment at 216 to 243 threads the bilayer; the sequence is YMIVLMITCCFIPLGIIILCYIAVWWAI. Over 244–265 the chain is Cytoplasmic; that stretch reads RTVAQQQKDSESTQKAEKEVSR. Residues 266-289 traverse the membrane as a helical segment; that stretch reads MVVVMIMAYCFCWGPYTFFACFAA. Over 290–297 the chain is Extracellular; the sequence is ANPGYAFH. A helical transmembrane segment spans residues 298 to 322; sequence PLAAAMPAYFAKSATIYNPVIYVFM. Position 309 is an N6-(retinylidene)lysine (lysine 309). At 323-357 the chain is on the cytoplasmic side; that stretch reads NRQFRVCIMQLFGKKVDDGSEVSTSKTEVSSVAPA.

The protein belongs to the G-protein coupled receptor 1 family. Opsin subfamily. Phosphorylated on some or all of the serine and threonine residues present in the C-terminal region. The color pigments are found in the cone photoreceptor cells.

Its subcellular location is the membrane. Its function is as follows. Visual pigments are the light-absorbing molecules that mediate vision. They consist of an apoprotein, opsin, covalently linked to cis-retinal. The protein is Red-sensitive opsin (R007) of Psalidodon fasciatus (Banded astyanax).